The sequence spans 184 residues: ATP synthase subunit b, chloroplastic (184 aa).

Residues 27–49 (LATNPINLSVVLGVLIFFGKGVL) form a helical membrane-spanning segment.

It belongs to the ATPase B chain family. As to quaternary structure, F-type ATPases have 2 components, F(1) - the catalytic core - and F(0) - the membrane proton channel. F(1) has five subunits: alpha(3), beta(3), gamma(1), delta(1), epsilon(1). F(0) has four main subunits: a(1), b(1), b'(1) and c(10-14). The alpha and beta chains form an alternating ring which encloses part of the gamma chain. F(1) is attached to F(0) by a central stalk formed by the gamma and epsilon chains, while a peripheral stalk is formed by the delta, b and b' chains.

It localises to the plastid. The protein resides in the chloroplast thylakoid membrane. F(1)F(0) ATP synthase produces ATP from ADP in the presence of a proton or sodium gradient. F-type ATPases consist of two structural domains, F(1) containing the extramembraneous catalytic core and F(0) containing the membrane proton channel, linked together by a central stalk and a peripheral stalk. During catalysis, ATP synthesis in the catalytic domain of F(1) is coupled via a rotary mechanism of the central stalk subunits to proton translocation. Functionally, component of the F(0) channel, it forms part of the peripheral stalk, linking F(1) to F(0). In Piper cenocladum (Ant piper), this protein is ATP synthase subunit b, chloroplastic.